The primary structure comprises 1495 residues: Terminal uridylyltransferase 7 (1495 aa).

4 disordered regions span residues 1–30 (MGDTAKPYFVKRTKDRGTMDDDDFRRGHPQ), 43–69 (HGSKMEKGLQKKKITPGNYGNTPRKGP), 89–140 (WMND…EDGY), and 162–205 (LETT…PVID). Basic and acidic residues predominate over residues 15-26 (DRGTMDDDDFRR). 2 positions are modified to phosphothreonine: threonine 57 and threonine 64. 2 stretches are compositionally biased toward basic and acidic residues: residues 92–118 (DSHKDQSKRWLSDEHTGNSDNWREFKP) and 128–140 (QRKDSFQENEDGY). Phosphoserine is present on residues serine 132 and serine 172. Over residues 178-187 (QRSRPRKPRK) the composition is skewed to basic residues. Residues 244–274 (YTCRLCDVLIESIAFAHKHIKEKRHKKNIKE) form a Matrin-type zinc finger. Residues 551-600 (VGQLWVELLRFYALEFNLADLVISIRVKELVSRELKDWPKKRIAIEDPYS) form the PAP-associated 1 domain. Phosphoserine is present on serine 600. Basic and acidic residues predominate over residues 734 to 756 (DDYKGDKVYHPETGRKNEKEKVG). Disordered regions lie at residues 734 to 757 (DDYKGDKVYHPETGRKNEKEKVGR) and 831 to 898 (THSV…EDDE). The segment covering 831 to 841 (THSVQGQTSEM) has biased composition (polar residues). 3 stretches are compositionally biased toward acidic residues: residues 843–859 (PSDEEEEDDEEEEEEEE), 868–880 (EDEDGMANEDELD), and 887–898 (GDEDALSEEDDE). Serine 844 bears the Phosphoserine mark. Phosphoserine is present on residues serine 893 and serine 939. The interval 951-1495 (SKLIFTKGKS…ASAKRTQQES (545 aa)) is sufficient for monouridylation activity. The CCHC-type 1 zinc finger occupies 963 to 980 (VVCSLCKREGHLKKDCPE). Residues 1047 to 1050 (SSKN), 1057 to 1060 (SDLD), asparagine 1130, lysine 1152, 1170 to 1174 (SYAYT), and histidine 1286 contribute to the UTP site. Mg(2+) is bound by residues aspartate 1058 and aspartate 1060. In terms of domain architecture, PAP-associated 2 spans 1233-1286 (SVGQLWLGLLRFYTEEFDFKEHVISIRRKSLLTTFKKQWTSKYIVIEDPFDLNH). Residues 1345-1362 (RCCRICGKIGHFMKDCPM) form a CCHC-type 2 zinc finger. Disordered regions lie at residues 1367-1424 (RRRR…MRAA) and 1466-1495 (CPQFKGSSGSLSSKYMTQGKASAKRTQQES). Residues 1381 to 1410 (PENKEKRSKEDKEIHNKYTEREVSTKEDKP) show a composition bias toward basic and acidic residues. The CCHC-type 3 zinc-finger motif lies at 1451 to 1468 (KRCFICGREGHIKKECPQ). The span at 1470–1485 (KGSSGSLSSKYMTQGK) shows a compositional bias: polar residues.

The protein belongs to the DNA polymerase type-B-like family. In terms of assembly, interacts with MOV10; the interaction is RNA-dependent. Mg(2+) is required as a cofactor. It depends on Mn(2+) as a cofactor.

The protein resides in the cytoplasm. It catalyses the reaction RNA(n) + UTP = RNA(n)-3'-uridine ribonucleotide + diphosphate. In terms of biological role, uridylyltransferase that mediates the terminal uridylation of mRNAs with short (less than 25 nucleotides) poly(A) tails, hence facilitating global mRNA decay. Essential for both oocyte maturation and fertility. Through 3' terminal uridylation of mRNA, sculpts, with TUT7, the maternal transcriptome by eliminating transcripts during oocyte growth. Involved in microRNA (miRNA)-induced gene silencing through uridylation of deadenylated miRNA targets. Also functions as an integral regulator of microRNA biogenesiS using 3 different uridylation mechanisms. Acts as a suppressor of miRNA biogenesis by mediating the terminal uridylation of some miRNA precursors, including that of let-7 (pre-let-7). Uridylated pre-let-7 RNA is not processed by Dicer and undergo degradation. Pre-let-7 uridylation is strongly enhanced in the presence of LIN28A. In the absence of LIN28A, TUT7 and TUT4 monouridylate group II pre-miRNAs, which includes most of pre-let7 members, that shapes an optimal 3' end overhang for efficient processing. Add oligo-U tails to truncated pre-miRNAS with a 5' overhang which may promote rapid degradation of non-functional pre-miRNA species. Does not play a role in replication-dependent histone mRNA degradation. Due to functional redundancy between TUT4 and TUT7, the identification of the specific role of each of these proteins is difficult. TUT4 and TUT7 restrict retrotransposition of long interspersed element-1 (LINE-1) in cooperation with MOV10 counteracting the RNA chaperonne activity of L1RE1. TUT7 uridylates LINE-1 mRNAs in the cytoplasm which inhibits initiation of reverse transcription once in the nucleus, whereas uridylation by TUT4 destabilizes mRNAs in cytoplasmic ribonucleoprotein granules. The sequence is that of Terminal uridylyltransferase 7 from Homo sapiens (Human).